Reading from the N-terminus, the 144-residue chain is uncharacterized protein (144 aa).

This is an uncharacterized protein from Vibrio parahaemolyticus serotype O3:K6 (strain RIMD 2210633).